The primary structure comprises 249 residues: Uridylate kinase (249 aa).

Residue 21–24 participates in ATP binding; sequence KLSG. G63 provides a ligand contact to UMP. Positions 64 and 68 each coordinate ATP. UMP is bound by residues D84 and 145 to 152; that span reads TGNPFVTT. 3 residues coordinate ATP: T172, Y178, and D181.

It belongs to the UMP kinase family. In terms of assembly, homohexamer.

The protein localises to the cytoplasm. The enzyme catalyses UMP + ATP = UDP + ADP. The protein operates within pyrimidine metabolism; CTP biosynthesis via de novo pathway; UDP from UMP (UMPK route): step 1/1. With respect to regulation, inhibited by UTP. In terms of biological role, catalyzes the reversible phosphorylation of UMP to UDP. The protein is Uridylate kinase of Francisella tularensis subsp. holarctica (strain FTNF002-00 / FTA).